The sequence spans 291 residues: 33 kDa chaperonin (291 aa).

Intrachain disulfides connect C229-C231 and C262-C265.

It belongs to the HSP33 family. Under oxidizing conditions two disulfide bonds are formed involving the reactive cysteines. Under reducing conditions zinc is bound to the reactive cysteines and the protein is inactive.

The protein resides in the cytoplasm. In terms of biological role, redox regulated molecular chaperone. Protects both thermally unfolding and oxidatively damaged proteins from irreversible aggregation. Plays an important role in the bacterial defense system toward oxidative stress. In Aliivibrio salmonicida (strain LFI1238) (Vibrio salmonicida (strain LFI1238)), this protein is 33 kDa chaperonin.